The following is a 341-amino-acid chain: Large ribosomal subunit protein uL29m (341 aa).

The disordered stretch occupies residues 44–74 (LARTRYTKPKPKPPRRSKVRAPTQTTHHDTD). Residues 48 to 62 (RYTKPKPKPPRRSKV) show a composition bias toward basic residues.

The protein belongs to the universal ribosomal protein uL29 family. As to quaternary structure, component of the mitochondrial large ribosomal subunit. Mature mitochondrial ribosomes consist of a small (37S) and a large (54S) subunit. The 37S subunit contains at least 33 different proteins and 1 molecule of RNA (15S). The 54S subunit contains at least 45 different proteins and 1 molecule of RNA (21S).

It is found in the mitochondrion. The chain is Large ribosomal subunit protein uL29m (MRPL4) from Eremothecium gossypii (strain ATCC 10895 / CBS 109.51 / FGSC 9923 / NRRL Y-1056) (Yeast).